The sequence spans 258 residues: Peptidase inhibitor 15 (258 aa).

The N-terminal stretch at Met1–Gly21 is a signal peptide. Residues Leu22–Arg60 constitute a propeptide that is removed on maturation. 2 N-linked (GlcNAc...) asparagine glycosylation sites follow: Asn36 and Asn124. The 141-residue stretch at Val71–Tyr211 folds into the SCP domain.

It belongs to the CRISP family.

The protein resides in the secreted. Its function is as follows. Serine protease inhibitor which displays weak inhibitory activity against trypsin. May be involved in facial patterning during embryonic development. This is Peptidase inhibitor 15 (pi15) from Xenopus laevis (African clawed frog).